The chain runs to 77 residues: Liver-expressed antimicrobial peptide 2 (77 aa).

An N-terminal signal peptide occupies residues 1–22 (MWHLKLFAVLMICLLLLAQVDG). Positions 23–37 (SPIPQQSSAKRRPRR) are excised as a propeptide. 2 disulfides stabilise this stretch: cysteine 54/cysteine 65 and cysteine 60/cysteine 70.

It belongs to the LEAP2 family.

The protein localises to the secreted. Functionally, has an antimicrobial activity. This chain is Liver-expressed antimicrobial peptide 2 (LEAP2), found in Bos taurus (Bovine).